The primary structure comprises 657 residues: Iron-sulfur cluster biogenesis chaperone, mitochondrial (657 aa).

It belongs to the heat shock protein 70 family. In terms of assembly, interacts with the Fe/S cluster assembly proteins ISU1, MGE1, GRX5 and JAC1.

Its subcellular location is the mitochondrion matrix. The enzyme catalyses ATP + H2O = ADP + phosphate + H(+). In terms of biological role, required for the assembly of iron-sulfur (Fe/S) clusters in mitochondria. Assisted by the DnaJ-like co-chaperone JAC1 and the nucleotide exchange factor MGE1, it mediates ATP-dependent Fe-S cluster transfer from the scaffold proteins ISU1/ISU2 to GRX5. The sequence is that of Iron-sulfur cluster biogenesis chaperone, mitochondrial from Saccharomyces cerevisiae (strain ATCC 204508 / S288c) (Baker's yeast).